We begin with the raw amino-acid sequence, 373 residues long: Dual-specificity RNA methyltransferase RlmN (373 aa).

Glutamate 94 serves as the catalytic Proton acceptor. Residues 100 to 339 form the Radical SAM core domain; that stretch reads EDDRATLCVS…VIVRKTRGDD (240 aa). Cysteine 107 and cysteine 344 are disulfide-bonded. 3 residues coordinate [4Fe-4S] cluster: cysteine 114, cysteine 118, and cysteine 121. S-adenosyl-L-methionine is bound by residues 168–169, serine 200, 222–224, and asparagine 301; these read GE and SIH. The active-site S-methylcysteine intermediate is the cysteine 344.

It belongs to the radical SAM superfamily. RlmN family. It depends on [4Fe-4S] cluster as a cofactor.

It localises to the cytoplasm. It carries out the reaction adenosine(2503) in 23S rRNA + 2 reduced [2Fe-2S]-[ferredoxin] + 2 S-adenosyl-L-methionine = 2-methyladenosine(2503) in 23S rRNA + 5'-deoxyadenosine + L-methionine + 2 oxidized [2Fe-2S]-[ferredoxin] + S-adenosyl-L-homocysteine. The enzyme catalyses adenosine(37) in tRNA + 2 reduced [2Fe-2S]-[ferredoxin] + 2 S-adenosyl-L-methionine = 2-methyladenosine(37) in tRNA + 5'-deoxyadenosine + L-methionine + 2 oxidized [2Fe-2S]-[ferredoxin] + S-adenosyl-L-homocysteine. Its function is as follows. Specifically methylates position 2 of adenine 2503 in 23S rRNA and position 2 of adenine 37 in tRNAs. m2A2503 modification seems to play a crucial role in the proofreading step occurring at the peptidyl transferase center and thus would serve to optimize ribosomal fidelity. This is Dual-specificity RNA methyltransferase RlmN from Shewanella sp. (strain MR-4).